Consider the following 689-residue polypeptide: MRHPAFRLTLLASTVAFALAPQAAQAAPSAADRIAGTELIARDALFGNPERANVQISPDGKYLSWVAAVDGVLNVWIAPADNPSQARAVTQDTARGIRSYFWSYQPDTLLYLRDSGGDEDFHLYAVDLKTGQAKDLTPFPKTTAQVAGVSPKHPGTILVGMNDRDAQWHDIYKVDLASGNRTLLEKNDAQIAGYIADADYTLKYAQRSRPDGGADVLRRGANGAWEKFDDIPFEDVLTTSPGGLTLDGKTLYFTDSRGRNTAALFAIDVASGKRTLVLEDARADVGGTLADPATGKVQAVSVDYLRDEWKVVDPAIRADLEKLEAIGPGDVSVNTRTLDDKTWIVAYSAAEAPLVYYRYDRSAGTLTKLFSARPKLEGKPLVPQWPVEIASRDNKTLVSYLTLPRSADANNDGKADAPVPLVLLVHGGPWARDSYGYGGYNQWLANRGYAVLSVNFRGSTGFGKDFTNAGNGEWAGKMHDDLIDAVQWAVKQGVTTQDQVAIMGGSYGGYATLTGLTFTPDAFACGVDIVGPSNLNTLLSTVPPYWASFFEQLAKRMGDPRTDAGKKWLTERSPLTRADQIKKPLLIGQGANDPRVKQAESDQIVKAMQAKNIPVTYVLFPDEGHGFARPENNKAFNAVTEGFLAQCLGGRAEPIGKDFTGSSISVPVGADGVPGLAEALKGHTQEVKK.

The signal sequence occupies residues 1–26 (MRHPAFRLTLLASTVAFALAPQAAQA). Residues serine 506, aspartate 593, and histidine 625 each act as charge relay system in the active site.

Belongs to the peptidase S9C family. Monomer.

Strongly inhibited by the serine protease inhibitor diisopropyl fluorophosphate (DFP), chymostatin, leupeptin, 0.5 mM ZnCl(2), 10 mM o-phenanthlorine and N-tosyl-L-phenyl-alanyl chloromethyl ketone (TPCK), but not by N-tosyl-L-lysyl chloromethyl ketone (TLCK). Activity is not affected significantly by iodoacetate (IAA), L-trans-epoxysuccinyl-leucylamido(4-guanido)butane (E64), pepstatin A and phenylmethanesulfonyl fluoride (PMSF). Activity is stimulated by addition of 0.5 mM CaCl(2), 10 mM EDTA and N-ethylmaleimide (NEM). Functionally, exopeptidase that catalyzes the removal of dipeptide units (NH2-P2-P1- or -P1'-P2'-COOH) from the free amino or carboxy termini. Prefers substrates composed of bulky, hydrophobic amino acids at P1 and P1' positions. Has endopeptidase activity on N-terminally blocked peptide derivatives which contain aromatic amino acid residue at the P1 position. Exopeptidase activity is much higher than its endopeptidase activity. In Pseudoxanthomonas mexicana, this protein is Dipeptidyl aminopeptidase BIII.